A 373-amino-acid chain; its full sequence is MFGSSGFGNKSMFGGSNISTSTTTPAANTTQNDDFLVDGAPEDTIQVIKFSPTPQDKPMLACGSWDGTIRVWMFNDANTFEGKAQQNIPAPILDIAWIEDSSKIFIACADKEARLWDLASNQVAVVGTHDGPVKTCHWINGNNYQCLMTGSFDKTLRFWDMKNLPNQTQMAQIQLPERVYAADVLYPMAVVALANKHIKVYNLENGPTEVKDIESQLKFQIRCISIFKDKSNQNPAGFALGSIEGRVAVQYVDVANPKDNFTFKCHRSAELVNGFQEIYAVNDICFHPQHGTLVTIGSDGRYSMWDKDARTKLKTSEPHPMPLTCCDVHSSGAFLVYALGYDWSRGHEGNTQPGSKIVIHKCIEDMKPRPTKK.

M1 is modified (N-acetylmethionine). WD repeat units lie at residues 40–82 (APED…TFEG), 87–126 (NIPA…VAVV), 128–169 (THDG…NQTQ), and 276–315 (QEIY…KLKT).

This sequence belongs to the WD repeat rae1 family. In terms of assembly, the nuclear pore complex (NPC) constitutes the exclusive means of nucleocytoplasmic transport. NPCs allow the passive diffusion of ions and small molecules and the active, nuclear transport receptor-mediated bidirectional transport of macromolecules such as proteins, RNAs, ribonucleoparticles (RNPs), and ribosomal subunits across the nuclear envelope. Interacts with rpm-1. Expressed along the ventral and dorsal nerve cords.

The protein localises to the nucleus. Its subcellular location is the nuclear pore complex. It is found in the cell projection. It localises to the axon. The protein resides in the synapse. Functionally, functions as a component of the nuclear pore complex (NPC). NPC components, collectively referred to as nucleoporins (NUPs), can play the role of both NPC structural components and of docking or interaction partners for transiently associated nuclear transport factors. It is specifically important for nuclear mRNA export. Has a role in neuronal development, where it acts downstream of rpm-1 to control axon termination and synapse formation in anterior lateral microtubule (ALM) and posterior lateral microtubule (PLM) mechanosensory neurons. The chain is mRNA export factor rae-1 from Caenorhabditis elegans.